The primary structure comprises 714 residues: DNA ligase (714 aa).

Residues 48 to 52 (DADYD), 97 to 98 (SL), and E129 each bind NAD(+). The active-site N6-AMP-lysine intermediate is K131. NAD(+) is bound by residues R152, E189, K307, and K331. Zn(2+) contacts are provided by C436, C439, C454, and C460. Positions 637-714 (KQDTAVAGKT…TEDEWLALIG (78 aa)) constitute a BRCT domain.

It belongs to the NAD-dependent DNA ligase family. LigA subfamily. Mg(2+) is required as a cofactor. Requires Mn(2+) as cofactor.

It carries out the reaction NAD(+) + (deoxyribonucleotide)n-3'-hydroxyl + 5'-phospho-(deoxyribonucleotide)m = (deoxyribonucleotide)n+m + AMP + beta-nicotinamide D-nucleotide.. In terms of biological role, DNA ligase that catalyzes the formation of phosphodiester linkages between 5'-phosphoryl and 3'-hydroxyl groups in double-stranded DNA using NAD as a coenzyme and as the energy source for the reaction. It is essential for DNA replication and repair of damaged DNA. The protein is DNA ligase of Rhodopseudomonas palustris (strain BisB5).